We begin with the raw amino-acid sequence, 418 residues long: Serine hydroxymethyltransferase (418 aa).

(6S)-5,6,7,8-tetrahydrofolate contacts are provided by residues leucine 121 and 125-127; that span reads GHL. Lysine 230 is subject to N6-(pyridoxal phosphate)lysine. (6S)-5,6,7,8-tetrahydrofolate is bound at residue 356–358; it reads SPF.

The protein belongs to the SHMT family. As to quaternary structure, homodimer. It depends on pyridoxal 5'-phosphate as a cofactor.

The protein localises to the cytoplasm. It carries out the reaction (6R)-5,10-methylene-5,6,7,8-tetrahydrofolate + glycine + H2O = (6S)-5,6,7,8-tetrahydrofolate + L-serine. Its pathway is one-carbon metabolism; tetrahydrofolate interconversion. It functions in the pathway amino-acid biosynthesis; glycine biosynthesis; glycine from L-serine: step 1/1. In terms of biological role, catalyzes the reversible interconversion of serine and glycine with tetrahydrofolate (THF) serving as the one-carbon carrier. This reaction serves as the major source of one-carbon groups required for the biosynthesis of purines, thymidylate, methionine, and other important biomolecules. Also exhibits THF-independent aldolase activity toward beta-hydroxyamino acids, producing glycine and aldehydes, via a retro-aldol mechanism. The polypeptide is Serine hydroxymethyltransferase (Shewanella pealeana (strain ATCC 700345 / ANG-SQ1)).